The sequence spans 378 residues: Chaperone protein DnaJ (378 aa).

Positions 5 to 70 (DYYEVLGLQK…EKRAMYDQYG (66 aa)) constitute a J domain. A CR-type zinc finger spans residues 135 to 213 (GVKKDIRIRT…CHGDGRVEKT (79 aa)). Positions 148, 151, 165, 168, 187, 190, 201, and 204 each coordinate Zn(2+). CXXCXGXG motif repeat units follow at residues 148–155 (CDTCHGSG), 165–172 (CPHCHGSG), 187–194 (CPSCHGTG), and 201–208 (CKSCHGDG).

Belongs to the DnaJ family. Homodimer. Requires Zn(2+) as cofactor.

It localises to the cytoplasm. In terms of biological role, participates actively in the response to hyperosmotic and heat shock by preventing the aggregation of stress-denatured proteins and by disaggregating proteins, also in an autonomous, DnaK-independent fashion. Unfolded proteins bind initially to DnaJ; upon interaction with the DnaJ-bound protein, DnaK hydrolyzes its bound ATP, resulting in the formation of a stable complex. GrpE releases ADP from DnaK; ATP binding to DnaK triggers the release of the substrate protein, thus completing the reaction cycle. Several rounds of ATP-dependent interactions between DnaJ, DnaK and GrpE are required for fully efficient folding. Also involved, together with DnaK and GrpE, in the DNA replication of plasmids through activation of initiation proteins. In Glaesserella parasuis serovar 5 (strain SH0165) (Haemophilus parasuis), this protein is Chaperone protein DnaJ.